The chain runs to 185 residues: MGLKADCWIRQKAVEDGMIEPFCEDQIGKGVVSYGLSSYGYDIRVSDEFKIFTNVNAEVVDPKHFDERNVVDFKGDVCIVPPNSFALARTVEYFRIPRNVLAICVGKSTYARCGIIVNVTPFEPEFEGHITIEISNTTPLPAKIYANEGIAQVLFFEGDEDCEVSYKDKRGKYQHQRGITLPKIL.

107-112 (KSTYAR) is a dCTP binding site. Glu133 acts as the Proton donor/acceptor in catalysis. DCTP is bound by residues Gln152, Tyr166, and Gln176.

The protein belongs to the dCTP deaminase family. As to quaternary structure, homotrimer.

It catalyses the reaction dCTP + H2O + H(+) = dUTP + NH4(+). It participates in pyrimidine metabolism; dUMP biosynthesis; dUMP from dCTP (dUTP route): step 1/2. Functionally, catalyzes the deamination of dCTP to dUTP. The polypeptide is dCTP deaminase (Nitratiruptor sp. (strain SB155-2)).